Reading from the N-terminus, the 120-residue chain is Ribonuclease P protein component (120 aa).

It belongs to the RnpA family. In terms of assembly, consists of a catalytic RNA component (M1 or rnpB) and a protein subunit.

The catalysed reaction is Endonucleolytic cleavage of RNA, removing 5'-extranucleotides from tRNA precursor.. Functionally, RNaseP catalyzes the removal of the 5'-leader sequence from pre-tRNA to produce the mature 5'-terminus. It can also cleave other RNA substrates such as 4.5S RNA. The protein component plays an auxiliary but essential role in vivo by binding to the 5'-leader sequence and broadening the substrate specificity of the ribozyme. In Thioalkalivibrio sulfidiphilus (strain HL-EbGR7), this protein is Ribonuclease P protein component.